The chain runs to 481 residues: UDP-N-acetylmuramoyl-L-alanyl-D-glutamate--L-lysine ligase (481 aa).

Ser42 is a UDP-N-acetyl-alpha-D-muramoyl-L-alanyl-D-glutamate binding site. Position 118–124 (118–124) interacts with ATP; the sequence is GTKGKTT. UDP-N-acetyl-alpha-D-muramoyl-L-alanyl-D-glutamate-binding positions include 160–161, Ser187, and Arg195; that span reads TT. Residue Lys229 is modified to N6-carboxylysine. The L-lysine recognition motif signature appears at 404–407; it reads DDPN.

Belongs to the MurCDEF family. MurE subfamily. Carboxylation is probably crucial for Mg(2+) binding and, consequently, for the gamma-phosphate positioning of ATP.

The protein resides in the cytoplasm. The catalysed reaction is UDP-N-acetyl-alpha-D-muramoyl-L-alanyl-D-glutamate + L-lysine + ATP = UDP-N-acetyl-alpha-D-muramoyl-L-alanyl-gamma-D-glutamyl-L-lysine + ADP + phosphate + H(+). It participates in cell wall biogenesis; peptidoglycan biosynthesis. In terms of biological role, catalyzes the addition of L-lysine to the nucleotide precursor UDP-N-acetylmuramoyl-L-alanyl-D-glutamate (UMAG) in the biosynthesis of bacterial cell-wall peptidoglycan. The chain is UDP-N-acetylmuramoyl-L-alanyl-D-glutamate--L-lysine ligase from Streptococcus pneumoniae (strain ATCC BAA-255 / R6).